The following is a 546-amino-acid chain: Chaperonin GroEL (546 aa).

ATP is bound by residues 30–33, lysine 51, 87–91, glycine 415, 479–481, and aspartate 495; these read TLGP, DGTTT, and NAA. Residues 526–546 are disordered; that stretch reads KKDEPAMPAGGGMGGMGGMDF. The span at 534–546 shows a compositional bias: gly residues; it reads AGGGMGGMGGMDF.

It belongs to the chaperonin (HSP60) family. Forms a cylinder of 14 subunits composed of two heptameric rings stacked back-to-back. Interacts with the co-chaperonin GroES.

Its subcellular location is the cytoplasm. It carries out the reaction ATP + H2O + a folded polypeptide = ADP + phosphate + an unfolded polypeptide.. Functionally, together with its co-chaperonin GroES, plays an essential role in assisting protein folding. The GroEL-GroES system forms a nano-cage that allows encapsulation of the non-native substrate proteins and provides a physical environment optimized to promote and accelerate protein folding. In Xanthomonas euvesicatoria pv. vesicatoria (strain 85-10) (Xanthomonas campestris pv. vesicatoria), this protein is Chaperonin GroEL.